The sequence spans 236 residues: Transmembrane protein 65 (236 aa).

The N-terminal 57 residues, 1-57, are a transit peptide targeting the mitochondrion; the sequence is MSRLLPLLRSRTARSLRPGPAAAAAPRPPSWCCCGRGLLALAAPGGPRALGTHPKKE. Residues 58 to 106 lie on the Cytoplasmic side of the membrane; the sequence is PIEALNTAQGARDFIYSLHSSERSCLLKELHRFESIAIAQEKLEAQPPT. The chain crosses the membrane as a helical span at residues 107-127; the sequence is PGQLRYVFIHNAIPFIGFGFL. Residues 128-138 lie on the Extracellular side of the membrane; that stretch reads DNAIMIVAGTH. A helical membrane pass occupies residues 139–161; sequence IELSIGIILGISTMAAAALGNLV. The Cytoplasmic segment spans residues 162-205; that stretch reads SDLAGLGLAGYVEALASRLGLSIPDLSPKQVDMWQTRVSSHLGK. Residues 206 to 226 traverse the membrane as a helical segment; the sequence is AVGVTIGCILGMFPLIFFGGG. The Extracellular segment spans residues 227–236; it reads EDDEKLEKKN.

In terms of assembly, monomer. Homodimer. Interacts with GJA1. Interacts weakly with DSP. Interacts with SCN1B.

Its subcellular location is the cell membrane. It is found in the mitochondrion inner membrane. Essential for maintaining proper cardiac intercalated disk (ICD) structure and function as well as cardiac conduction velocity in the heart. Its association with SCN1B is required for stabilizing the perinexus in the ICD and for localization of GJA1 and SCN5A to the ICD. May regulate the function of the gap junction protein GJA1 and may contribute to the stability and proper localization of GJA1 to cardiac intercalated disk thereby regulating gap junction communication. Regulates mitochondrial respiration and mitochondrial DNA copy number maintenance. The chain is Transmembrane protein 65 (TMEM65) from Bos taurus (Bovine).